A 631-amino-acid chain; its full sequence is Golgin subfamily A member 8R (631 aa).

Residues 1–72 (MAEETQHNKL…REGPTSSATL (72 aa)) form a disordered region. A compositionally biased stretch (polar residues) spans 38-50 (TNGSIPETATSGG). 3 coiled-coil regions span residues 85–149 (VLDS…NTDL), 209–247 (ELEQSLQDQALLKAQLTQLKESFQQLQLERDECAEHIEG), and 303–419 (SEVE…LSLM). Disordered stretches follow at residues 422–451 (PGEGHGGEHLDSEGEEAPQPMPSVPEDPES), 502–523 (AKDAALGGGHHQAGAQGGDEGE), and 551–610 (NSAD…QEHP). Over residues 507–519 (LGGGHHQAGAQGG) the composition is skewed to gly residues. The span at 568-577 (AADKHGDLRE) shows a compositional bias: basic and acidic residues.

This sequence belongs to the GOLGA8 family.

This Homo sapiens (Human) protein is Golgin subfamily A member 8R.